The primary structure comprises 172 residues: DNA-directed RNA polymerase II subunit RPB7 (172 aa).

It belongs to the eukaryotic RPB7/RPC8 RNA polymerase subunit family. In terms of assembly, component of the RNA polymerase II (Pol II) complex consisting of 12 subunits. RPB4 and RPB7 form a subcomplex that protrudes from the 10-subunit Pol II core complex.

It is found in the nucleus. Functionally, DNA-dependent RNA polymerase catalyzes the transcription of DNA into RNA using the four ribonucleoside triphosphates as substrates. Component of RNA polymerase II which synthesizes mRNA precursors and many functional non-coding RNAs. Pol II is the central component of the basal RNA polymerase II transcription machinery. It is composed of mobile elements that move relative to each other. RPB7 is part of a subcomplex with RPB4 that binds to a pocket formed by RPB1, RPB2 and RPB6 at the base of the clamp element. The RPB4-RPB7 subcomplex seems to lock the clamp via RPB7 in the closed conformation thus preventing double-stranded DNA to enter the active site cleft. The RPB4-RPB7 subcomplex binds single-stranded DNA and RNA. The chain is DNA-directed RNA polymerase II subunit RPB7 (polr2g) from Danio rerio (Zebrafish).